The primary structure comprises 375 residues: tRNA-specific 2-thiouridylase MnmA (375 aa).

Residues 12–19 and Met38 contribute to the ATP site; that span reads GMSGGVDS. The interval 98-100 is interaction with target base in tRNA; it reads NPD. Cys103 (nucleophile) is an active-site residue. A disulfide bond links Cys103 and Cys200. Gly127 contributes to the ATP binding site. Residues 150 to 152 are interaction with tRNA; the sequence is KDQ. Cys200 serves as the catalytic Cysteine persulfide intermediate. Residues 312–313 are interaction with tRNA; the sequence is RY.

Belongs to the MnmA/TRMU family.

It is found in the cytoplasm. It carries out the reaction S-sulfanyl-L-cysteinyl-[protein] + uridine(34) in tRNA + AH2 + ATP = 2-thiouridine(34) in tRNA + L-cysteinyl-[protein] + A + AMP + diphosphate + H(+). In terms of biological role, catalyzes the 2-thiolation of uridine at the wobble position (U34) of tRNA, leading to the formation of s(2)U34. This chain is tRNA-specific 2-thiouridylase MnmA, found in Ligilactobacillus salivarius (strain UCC118) (Lactobacillus salivarius).